The sequence spans 1403 residues: Sushi, nidogen and EGF-like domain-containing protein 1 (1403 aa).

The signal sequence occupies residues 1–24 (MRLGAAWALLLAAALGLGTRGVRA). One can recognise an NIDO domain in the interval 103–258 (AFWADVDNRR…GRWAFRIDDA (156 aa)). EGF-like domains follow at residues 268 to 309 (TTSV…RRCH), 311 to 347 (DVNE…PTCE), and 349 to 385 (AQSP…ATCE). Cystine bridges form between C272–C284, C278–C297, C299–C308, C315–C326, C320–C335, C337–C346, C353–C364, C358–C373, C375–C384, C391–C402, C396–C411, C413–C422, C433–C444, C438–C453, C455–C464, C472–C480, C474–C488, and C490–C499. An N-linked (GlcNAc...) asparagine glycan is attached at N292. In terms of domain architecture, EGF-like 4; calcium-binding spans 387–423 (DVDECSSDPCQNGGSCVDLVGNYSCICVEPFEGPQCE). The N-linked (GlcNAc...) asparagine glycan is linked to N408. EGF-like domains are found at residues 429-465 (VPSP…LDCR) and 468-500 (ILND…LLCE). A glycan (N-linked (GlcNAc...) asparagine) is linked at N484. N536 carries an N-linked (GlcNAc...) asparagine glycan. 4 consecutive EGF-like domains span residues 541 to 577 (LPSP…RHCE), 580 to 616 (RPHL…RHCE), 619 to 655 (KPDS…RHCE), and 657 to 693 (APSP…HRCQ). Cystine bridges form between C545/C556, C550/C565, C567/C576, C584/C595, C589/C604, C606/C615, C623/C634, C628/C643, C645/C654, C661/C672, C666/C681, C683/C692, C698/C739, C724/C751, C757/C768, C762/C777, C779/C788, C795/C806, C800/C815, C817/C826, C833/C844, C838/C853, C855/C864, C871/C882, C876/C891, and C893/C902. Positions 696-753 (VDCGHPEEVEHATMRFNGTHVGSVALYTCEPGFSLSALSHIRVCQPQGVWSQPPQCIE) constitute a Sushi domain. Residue N712 is glycosylated (N-linked (GlcNAc...) asparagine). Residues 753 to 789 (EVDECRSQPCLHGGSCQDLIADYQCLCSPGYEGVHCE) form the EGF-like 11; calcium-binding domain. The region spanning 791 to 827 (ETDECQAQPCRNGGSCRDLPRAFICQCPEGFVGIHCE) is the EGF-like 12; calcium-binding domain. 2 consecutive EGF-like domains span residues 829-865 (EVDA…YNCE) and 867-903 (VSDP…KDCT). N886 is a glycosylation site (N-linked (GlcNAc...) asparagine). Fibronectin type-III domains are found at residues 908–1006 (PPTA…TRPR), 1007–1105 (PIED…TRPL), and 1106–1200 (PPAN…SPRD). Residues N977, N1015, N1109, N1139, and N1298 are each glycosylated (N-linked (GlcNAc...) asparagine). Residues 1306 to 1342 (TPGSCSEDACQNGGTCVPGADAHSCDCRPGFKGRHCE) enclose the EGF-like 15 domain. Cystine bridges form between C1310/C1321, C1315/C1330, and C1332/C1341.

Post-translationally, phosphorylated on serine and threonine residues. In terms of processing, N-glycosylated. Expressed in lung.

Its subcellular location is the secreted. It localises to the extracellular space. The protein resides in the extracellular matrix. This is Sushi, nidogen and EGF-like domain-containing protein 1 from Mus musculus (Mouse).